Here is a 630-residue protein sequence, read N- to C-terminus: 1-deoxy-D-xylulose-5-phosphate synthase (630 aa).

Residues His-72 and 113–115 each bind thiamine diphosphate; that span reads GHS. Asp-144 provides a ligand contact to Mg(2+). Residues 145-146, Asn-173, Tyr-284, and Glu-367 each bind thiamine diphosphate; that span reads GA. Asn-173 is a Mg(2+) binding site.

The protein belongs to the transketolase family. DXPS subfamily. As to quaternary structure, homodimer. Requires Mg(2+) as cofactor. The cofactor is thiamine diphosphate.

It catalyses the reaction D-glyceraldehyde 3-phosphate + pyruvate + H(+) = 1-deoxy-D-xylulose 5-phosphate + CO2. The protein operates within metabolic intermediate biosynthesis; 1-deoxy-D-xylulose 5-phosphate biosynthesis; 1-deoxy-D-xylulose 5-phosphate from D-glyceraldehyde 3-phosphate and pyruvate: step 1/1. Its function is as follows. Catalyzes the acyloin condensation reaction between C atoms 2 and 3 of pyruvate and glyceraldehyde 3-phosphate to yield 1-deoxy-D-xylulose-5-phosphate (DXP). This is 1-deoxy-D-xylulose-5-phosphate synthase from Bacillus cereus (strain AH820).